Reading from the N-terminus, the 247-residue chain is Carboxy-S-adenosyl-L-methionine synthase (247 aa).

S-adenosyl-L-methionine is bound by residues Y39, 64-66 (GCS), 89-90 (DN), 117-118 (DI), N132, and R199.

It belongs to the class I-like SAM-binding methyltransferase superfamily. Cx-SAM synthase family. Homodimer.

The enzyme catalyses prephenate + S-adenosyl-L-methionine = carboxy-S-adenosyl-L-methionine + 3-phenylpyruvate + H2O. In terms of biological role, catalyzes the conversion of S-adenosyl-L-methionine (SAM) to carboxy-S-adenosyl-L-methionine (Cx-SAM). In Klebsiella pneumoniae (strain 342), this protein is Carboxy-S-adenosyl-L-methionine synthase.